The sequence spans 172 residues: uncharacterized protein (172 aa).

Residues 1–21 (MMKFKKCLLPVAMLASFTLAG) form the signal peptide. Cys-22 carries N-palmitoyl cysteine lipidation. Residue Cys-22 is the site of S-diacylglycerol cysteine attachment.

It localises to the cell membrane. This is an uncharacterized protein from Escherichia coli O157:H7.